Here is a 311-residue protein sequence, read N- to C-terminus: Giardin subunit gamma (311 aa).

Residues 185–233 (GLQTEINSLEAIIEREFAQAANRLNQEVSNFKESFDASERNIKLQKKHV) are a coiled coil.

As to quaternary structure, interacts with EB1.

The protein localises to the cytoplasm. It localises to the cytoskeleton. In terms of biological role, giardins are involved in parasite attachment to the intestinal mucosa and in the cytoskeletal disassembly and reassembly that marks the transition from infectious trophozoite to transmissible cyst. They may interact with other cytoskeletal proteins such as microtubules in the microribbons or crossbridges, to maintain the integrity of the ventral disk. Involved in formation of the ventral disk. This Giardia intestinalis (Giardia lamblia) protein is Giardin subunit gamma.